Consider the following 101-residue polypeptide: Small ribosomal subunit protein uS14 (101 aa).

This sequence belongs to the universal ribosomal protein uS14 family. As to quaternary structure, part of the 30S ribosomal subunit. Contacts proteins S3 and S10.

Binds 16S rRNA, required for the assembly of 30S particles and may also be responsible for determining the conformation of the 16S rRNA at the A site. The polypeptide is Small ribosomal subunit protein uS14 (Kocuria rhizophila (strain ATCC 9341 / DSM 348 / NBRC 103217 / DC2201)).